A 457-amino-acid polypeptide reads, in one-letter code: Probable xyloglucan 6-xylosyltransferase 5 (457 aa).

The tract at residues 1–40 is disordered; it reads MGQDGSPAHKRPSGSGGGLPTTTLTNGGGRGGRGGLLPRG. Residues 1 to 51 lie on the Cytoplasmic side of the membrane; sequence MGQDGSPAHKRPSGSGGGLPTTTLTNGGGRGGRGGLLPRGRQMQKTFNNIK. Over residues 26-37 the composition is skewed to gly residues; sequence NGGGRGGRGGLL. Residues 52 to 72 traverse the membrane as a helical; Signal-anchor for type II membrane protein segment; it reads ITILCGFVTILVLRGTIGVGN. Over 73–457 the chain is Lumenal; sequence LGSSSADAVN…RTPVETKPQN (385 aa). Positions 97 to 116 are disordered; that stretch reads RSDSDPTDLDEPQEGDMNPN. Positions 101-110 are enriched in acidic residues; that stretch reads DPTDLDEPQE. 2 N-linked (GlcNAc...) asparagine glycosylation sites follow: Asn-116 and Asn-432.

The protein belongs to the glycosyltransferase 34 family. As to quaternary structure, interacts with XXT2 and CSLC4. Interacts with FUT1 and XLT2. Highly expressed in roots, stems and cauline leaves, and at lower levels in rosette leaves, flowers and siliques.

The protein resides in the golgi apparatus membrane. It carries out the reaction Transfers an alpha-D-xylosyl residue from UDP-D-xylose to a glucose residue in xyloglucan, forming an alpha-(1-&gt;6)-D-xylosyl-D-glucose linkage.. In terms of biological role, probable xyloglucan xylosyltransferase involved in the biosynthesis of xyloglucan in roots. May act in association with XXT1 and XXT2. Associates with other xyloglucan-synthesizing enzymes to form multiprotein complexes for xyloglucan synthesis in the Golgi. The chain is Probable xyloglucan 6-xylosyltransferase 5 from Arabidopsis thaliana (Mouse-ear cress).